The following is a 62-amino-acid chain: Large ribosomal subunit protein bL28 (62 aa).

Belongs to the bacterial ribosomal protein bL28 family.

In Streptococcus uberis (strain ATCC BAA-854 / 0140J), this protein is Large ribosomal subunit protein bL28.